Here is a 101-residue protein sequence, read N- to C-terminus: Small ribosomal subunit protein bS18c (101 aa).

The span at 1–19 (MDKSKQPFRKSKRSFRRRL) shows a compositional bias: basic residues. The disordered stretch occupies residues 1–24 (MDKSKQPFRKSKRSFRRRLPPIGS).

This sequence belongs to the bacterial ribosomal protein bS18 family. As to quaternary structure, part of the 30S ribosomal subunit.

Its subcellular location is the plastid. The protein localises to the chloroplast. In Amborella trichopoda, this protein is Small ribosomal subunit protein bS18c.